Here is a 327-residue protein sequence, read N- to C-terminus: Porphobilinogen deaminase (327 aa).

C251 is modified (S-(dipyrrolylmethanemethyl)cysteine).

It belongs to the HMBS family. Dipyrromethane is required as a cofactor.

The enzyme catalyses 4 porphobilinogen + H2O = hydroxymethylbilane + 4 NH4(+). It functions in the pathway porphyrin-containing compound metabolism; protoporphyrin-IX biosynthesis; coproporphyrinogen-III from 5-aminolevulinate: step 2/4. In terms of biological role, tetrapolymerization of the monopyrrole PBG into the hydroxymethylbilane pre-uroporphyrinogen in several discrete steps. This is Porphobilinogen deaminase (HEM3) from Kluyveromyces lactis (strain ATCC 8585 / CBS 2359 / DSM 70799 / NBRC 1267 / NRRL Y-1140 / WM37) (Yeast).